Reading from the N-terminus, the 360-residue chain is MIAILVSGAVGLLVSLFGTPLFIRFLVKRQYGQFIRQDGPTAHFTKRGTPTMGGVVIIAATVLGYTVANISAQRMPQVSGLLLLFLMIGLGVIGFLDDFIKISRQRSLGLNARWKIIGQGVIGVTFSVLALQFPNEQFRTPASTQVSFIRDTGIDLAFAGAAVGLVLFVIWANFLITAWSNAVNLTDGLDGLATGVSVFVFSAYVVVTMWQSNQSCQVLSQVGPSCYETRDPRDLAIVTAAIVGACAGFLWWNASPAKIFMGDTGALALGGALAGLSILTRTEFLAVIIGGLFVVIVLSDVIQIGFFKMTRRRVFKMAPLHHHFELSGWNEVTIVIRFWLIAALFVALGVGIFYAEWVVG.

Transmembrane regions (helical) follow at residues 2–22 (IAIL…TPLF), 52–72 (MGGV…NISA), 80–100 (GLLL…DDFI), 114–134 (WKII…LQFP), 156–176 (LAFA…NFLI), 189–209 (LDGL…VVTM), 235–255 (LAIV…WNAS), 259–279 (IFMG…LSIL), 284–304 (FLAV…VIQI), and 338–358 (FWLI…AEWV).

This sequence belongs to the glycosyltransferase 4 family. MraY subfamily. Requires Mg(2+) as cofactor.

It localises to the cell membrane. The enzyme catalyses UDP-N-acetyl-alpha-D-muramoyl-L-alanyl-gamma-D-glutamyl-meso-2,6-diaminopimeloyl-D-alanyl-D-alanine + di-trans,octa-cis-undecaprenyl phosphate = di-trans,octa-cis-undecaprenyl diphospho-N-acetyl-alpha-D-muramoyl-L-alanyl-D-glutamyl-meso-2,6-diaminopimeloyl-D-alanyl-D-alanine + UMP. It participates in cell wall biogenesis; peptidoglycan biosynthesis. Functionally, catalyzes the initial step of the lipid cycle reactions in the biosynthesis of the cell wall peptidoglycan: transfers peptidoglycan precursor phospho-MurNAc-pentapeptide from UDP-MurNAc-pentapeptide onto the lipid carrier undecaprenyl phosphate, yielding undecaprenyl-pyrophosphoryl-MurNAc-pentapeptide, known as lipid I. The protein is Phospho-N-acetylmuramoyl-pentapeptide-transferase of Beutenbergia cavernae (strain ATCC BAA-8 / DSM 12333 / CCUG 43141 / JCM 11478 / NBRC 16432 / NCIMB 13614 / HKI 0122).